Consider the following 215-residue polypeptide: Pyridoxine/pyridoxamine 5'-phosphate oxidase (215 aa).

Substrate-binding positions include 9–12 and lysine 69; that span reads RRDY. Residues 64–69, 79–80, lysine 86, and glutamine 108 each bind FMN; these read RVLLLK and FT. Substrate contacts are provided by tyrosine 126, arginine 130, and serine 134. Residues 143–144 and tryptophan 188 each bind FMN; that span reads QS. 194-196 contributes to the substrate binding site; the sequence is RLH. Arginine 198 lines the FMN pocket.

Belongs to the pyridoxamine 5'-phosphate oxidase family. As to quaternary structure, homodimer. Requires FMN as cofactor.

It carries out the reaction pyridoxamine 5'-phosphate + O2 + H2O = pyridoxal 5'-phosphate + H2O2 + NH4(+). The catalysed reaction is pyridoxine 5'-phosphate + O2 = pyridoxal 5'-phosphate + H2O2. It functions in the pathway cofactor metabolism; pyridoxal 5'-phosphate salvage; pyridoxal 5'-phosphate from pyridoxamine 5'-phosphate: step 1/1. The protein operates within cofactor metabolism; pyridoxal 5'-phosphate salvage; pyridoxal 5'-phosphate from pyridoxine 5'-phosphate: step 1/1. Functionally, catalyzes the oxidation of either pyridoxine 5'-phosphate (PNP) or pyridoxamine 5'-phosphate (PMP) into pyridoxal 5'-phosphate (PLP). The protein is Pyridoxine/pyridoxamine 5'-phosphate oxidase of Pseudomonas putida (strain GB-1).